Reading from the N-terminus, the 406-residue chain is MEEPLGSPPAALSALEKNVAELTVMDVYDIASLVGHEFERVIDQHGCEAIARLMPKVVRVLEILEVLVSRHHVAPELDELRLELDRLRVERMDRIEKERKHQKELELVEDVWRGEAQDLLSQIAQLQEENKQLMTNLNHKDVGFSEEELQKHEGMSERERQVMKRLKEVVDKQRDEIRAKDRELVLKNEDVEALQQQQTRLMKINHDLRHRVTVVEAQGKALIEQKVELEADLQTKEQEMGSLRAELGKLRERLQGEHSQNGEEEEAEIPPQPDGEESISDAEKAALDLKDPNRPRFTLQELRDVLHERNELKSKVFLLQEELAYYKSEEIEEENRIPQPPPITHPRTSPQPESGIKRLFSFFSRDKRRLANTQRPTHIHESFGQWAITHRDDGYTEQGQEALQHL.

Ser-7 carries the post-translational modification Phosphoserine. Positions 10–97 (AALSALEKNV…RVERMDRIEK (88 aa)) constitute an RH1 domain. Cys-47 carries the post-translational modification S-nitrosocysteine. The stretch at 76–258 (ELDELRLELD…KLRERLQGEH (183 aa)) forms a coiled coil. 2 disordered regions span residues 255–280 (QGEH…ESIS) and 330–354 (EIEE…QPES). Ser-259 is modified (phosphoserine). Residues 262–280 (GEEEEAEIPPQPDGEESIS) show a composition bias toward acidic residues. The 66-residue stretch at 294-359 (RPRFTLQELR…PQPESGIKRL (66 aa)) folds into the RH2 domain.

It belongs to the RILPL family. As to quaternary structure, interacts (when S-nitrosylated) with GAPDH. Interacts with RAB8A; interaction is dependent on the phosphorylation of 'Thr-72' of RAB8A. Interacts with RAB10 and RAB12; the interaction is dependent on the phosphorylation of 'Thr-73' of RAB10, and 'Ser-105' of RAB12. In terms of processing, S-nitrosylation is required for the interaction with GAPDH. In terms of tissue distribution, highly expressed in heart, skeletal muscle, brain and lung (at protein level).

It is found in the cytoplasm. It localises to the cytosol. Its subcellular location is the cytoskeleton. The protein localises to the microtubule organizing center. The protein resides in the centrosome. It is found in the centriole. It localises to the cilium basal body. Plays a role in the regulation of cell shape and polarity. Plays a role in cellular protein transport, including protein transport away from primary cilia. Neuroprotective protein, which acts by sequestring GAPDH in the cytosol and prevent the apoptotic function of GAPDH in the nucleus. Competes with SIAH1 for binding GAPDH. Does not regulate lysosomal morphology and distribution. Binds to RAB10 following LRRK2-mediated RAB10 phosphorylation which leads to inhibition of ciliogenesis. This is RILP-like protein 1 (Rilpl1) from Rattus norvegicus (Rat).